Consider the following 213-residue polypeptide: Adenylate kinase (213 aa).

10-15 (GAGKGT) provides a ligand contact to ATP. Residues 30–59 (AVGDIFRTIIKTSTSEAELINNYVKQGALI) are NMP. AMP-binding positions include Arg36, 57-59 (ALI), 85-88 (GYPR), and Gln92. The LID stretch occupies residues 123–161 (GRYSCKNCGKIYNIHFLQPKIEHVCDVCSSSVFDYRKDD). Arg124 contributes to the ATP binding site. Cys127 and Cys130 together coordinate Zn(2+). 133 to 134 (IY) contributes to the ATP binding site. Residues Cys147 and Cys150 each contribute to the Zn(2+) site. Residues Arg158 and Arg169 each contribute to the AMP site. Position 197 (Lys197) interacts with ATP.

The protein belongs to the adenylate kinase family. As to quaternary structure, monomer.

The protein resides in the cytoplasm. The enzyme catalyses AMP + ATP = 2 ADP. The protein operates within purine metabolism; AMP biosynthesis via salvage pathway; AMP from ADP: step 1/1. Functionally, catalyzes the reversible transfer of the terminal phosphate group between ATP and AMP. Plays an important role in cellular energy homeostasis and in adenine nucleotide metabolism. This Rickettsia prowazekii (strain Madrid E) protein is Adenylate kinase.